Reading from the N-terminus, the 491-residue chain is Chromosomal replication initiator protein DnaA (491 aa).

The segment at 1–68 is domain I, interacts with DnaA modulators; sequence MTSIWGQIQH…RTAACGVIGD (68 aa). The segment at 68–146 is domain II; sequence DTVEVVVTAG…PLDWAPVPQS (79 aa). A domain III, AAA+ region region spans residues 147–364; that stretch reads RTNWRFSFDD…SCLHNLILKA (218 aa). ATP contacts are provided by Gly-190, Gly-192, Lys-193, and Thr-194. The tract at residues 365-491 is domain IV, binds dsDNA; that stretch reads KLLNRQISLE…RNGRITHARH (127 aa).

This sequence belongs to the DnaA family. As to quaternary structure, oligomerizes as a right-handed, spiral filament on DNA at oriC.

The protein resides in the cytoplasm. Its function is as follows. Plays an essential role in the initiation and regulation of chromosomal replication. ATP-DnaA binds to the origin of replication (oriC) to initiate formation of the DNA replication initiation complex once per cell cycle. Binds the DnaA box (a 9 base pair repeat at the origin) and separates the double-stranded (ds)DNA. Forms a right-handed helical filament on oriC DNA; dsDNA binds to the exterior of the filament while single-stranded (ss)DNA is stabiized in the filament's interior. The ATP-DnaA-oriC complex binds and stabilizes one strand of the AT-rich DNA unwinding element (DUE), permitting loading of DNA polymerase. After initiation quickly degrades to an ADP-DnaA complex that is not apt for DNA replication. Binds acidic phospholipids. In Nitratidesulfovibrio vulgaris (strain ATCC 29579 / DSM 644 / CCUG 34227 / NCIMB 8303 / VKM B-1760 / Hildenborough) (Desulfovibrio vulgaris), this protein is Chromosomal replication initiator protein DnaA.